The sequence spans 566 residues: Putative ankyrin repeat protein RF_0987 (566 aa).

3 disordered regions span residues 61-118, 276-314, and 355-392; these read KKKN…HENS, PPVMPTNQPSTQPITPPSPNTPVTTPSKVVPTTDSSAEI, and VNNNQTTNNQEKSPPVSSSNVTIQKQDDKVNNETSEST. Positions 78–92 are enriched in basic and acidic residues; the sequence is NQEEPKLASQEHTEA. Polar residues predominate over residues 101–112; it reads TGNTALPSVTAS. Residues 296–308 are compositionally biased toward low complexity; that stretch reads TPVTTPSKVVPTT. The span at 365–378 shows a compositional bias: polar residues; the sequence is EKSPPVSSSNVTIQ. 2 ANK repeats span residues 506–535 and 539–566; these read SGETLLTAAIYNDNYYLAKFLVIRGIKIST and ECQYPLDIALAQGNANIACMLIKAKGYQ.

This is Putative ankyrin repeat protein RF_0987 from Rickettsia felis (strain ATCC VR-1525 / URRWXCal2) (Rickettsia azadi).